A 236-amino-acid polypeptide reads, in one-letter code: Heme oxygenase (236 aa).

Histidine 17 is a heme b binding site.

It belongs to the heme oxygenase family.

The protein localises to the plastid. Its subcellular location is the chloroplast. The enzyme catalyses heme b + 3 reduced [NADPH--hemoprotein reductase] + 3 O2 = biliverdin IXalpha + CO + Fe(2+) + 3 oxidized [NADPH--hemoprotein reductase] + 3 H2O + H(+). Functionally, catalyzes the opening of the heme ring with the release of iron. Key enzyme in the synthesis of the chromophoric part of the photosynthetic antennae. This Porphyra purpurea (Red seaweed) protein is Heme oxygenase (pbsA).